The chain runs to 459 residues: Putrescine aminotransferase (459 aa).

Pyridoxal 5'-phosphate contacts are provided by residues 150–151 (GT) and Gln274. Lys300 bears the N6-(pyridoxal phosphate)lysine mark. Thr332 lines the pyridoxal 5'-phosphate pocket.

This sequence belongs to the class-III pyridoxal-phosphate-dependent aminotransferase family. Putrescine aminotransferase subfamily. Pyridoxal 5'-phosphate is required as a cofactor.

It catalyses the reaction an alkane-alpha,omega-diamine + 2-oxoglutarate = an omega-aminoaldehyde + L-glutamate. The enzyme catalyses putrescine + 2-oxoglutarate = 1-pyrroline + L-glutamate + H2O. It carries out the reaction cadaverine + 2-oxoglutarate = 5-aminopentanal + L-glutamate. Its pathway is amine and polyamine degradation; putrescine degradation; 4-aminobutanal from putrescine (transaminase route): step 1/1. Catalyzes the aminotransferase reaction from putrescine to 2-oxoglutarate, leading to glutamate and 4-aminobutanal, which spontaneously cyclizes to form 1-pyrroline. This is the first step in one of two pathways for putrescine degradation, where putrescine is converted into 4-aminobutanoate (gamma-aminobutyrate or GABA) via 4-aminobutanal. Also functions as a cadaverine transaminase in a a L-lysine degradation pathway to succinate that proceeds via cadaverine, glutarate and L-2-hydroxyglutarate. The chain is Putrescine aminotransferase from Salmonella dublin (strain CT_02021853).